The chain runs to 509 residues: ATP synthase subunit alpha (509 aa).

Residue 169–176 (GDRQTGKT) coordinates ATP.

It belongs to the ATPase alpha/beta chains family. As to quaternary structure, F-type ATPases have 2 components, CF(1) - the catalytic core - and CF(0) - the membrane proton channel. CF(1) has five subunits: alpha(3), beta(3), gamma(1), delta(1), epsilon(1). CF(0) has three main subunits: a(1), b(2) and c(9-12). The alpha and beta chains form an alternating ring which encloses part of the gamma chain. CF(1) is attached to CF(0) by a central stalk formed by the gamma and epsilon chains, while a peripheral stalk is formed by the delta and b chains.

It localises to the cell inner membrane. The enzyme catalyses ATP + H2O + 4 H(+)(in) = ADP + phosphate + 5 H(+)(out). Its function is as follows. Produces ATP from ADP in the presence of a proton gradient across the membrane. The alpha chain is a regulatory subunit. In Rhizobium meliloti (strain 1021) (Ensifer meliloti), this protein is ATP synthase subunit alpha.